The following is a 247-amino-acid chain: Uridylate kinase (247 aa).

ATP is bound at residue 15-18 (KLSG). An involved in allosteric activation by GTP region spans residues 23–28 (GDEGFG). Position 57 (Gly-57) interacts with UMP. Residues Gly-58 and Arg-62 each contribute to the ATP site. UMP is bound by residues Asp-77 and 138 to 145 (TGNPFFTT). ATP is bound by residues Thr-165, Tyr-171, and Asp-174.

Belongs to the UMP kinase family. As to quaternary structure, homohexamer.

It localises to the cytoplasm. The catalysed reaction is UMP + ATP = UDP + ADP. The protein operates within pyrimidine metabolism; CTP biosynthesis via de novo pathway; UDP from UMP (UMPK route): step 1/1. Its activity is regulated as follows. Allosterically activated by GTP. Inhibited by UTP. In terms of biological role, catalyzes the reversible phosphorylation of UMP to UDP. The protein is Uridylate kinase of Colwellia psychrerythraea (strain 34H / ATCC BAA-681) (Vibrio psychroerythus).